Here is a 1149-residue protein sequence, read N- to C-terminus: Guanine nucleotide exchange factor DBS (1149 aa).

Residues 52-224 (MATASDEIMH…DLGGTLDYCH (173 aa)) enclose the CRAL-TRIO domain. A Spectrin repeat occupies 355–454 (HFEQGFREVK…SEVTRRRDLL (100 aa)). Phosphoserine occurs at positions 457, 462, 471, and 480. The stretch at 503 to 528 (LETGAENKIQELNKIYKEYECILNQD) forms a coiled coil. The disordered stretch occupies residues 555–627 (KKLAAKQTRP…RTSSTGEEEE (73 aa)). The span at 583–594 (PGSWRSSENSSS) shows a compositional bias: low complexity. Residues 607–616 (AKSEMSEPRQ) show a composition bias toward basic and acidic residues. At S621 the chain carries Phosphoserine. A Phosphothreonine modification is found at T622. Residues 632 to 812 (LRRHVMNELL…LGILKAVNDS (181 aa)) enclose the DH domain. A PH domain is found at 830 to 946 (KLLMQGSFSV…WVNEIRKVLT (117 aa)). Residues 956–1033 (SQHRALEQSH…EAPEEDGGWS (78 aa)) are disordered. Residues 964 to 978 (SHSLPLPTPASTSPT) are compositionally biased toward low complexity. Residues S1033, S1034, S1041, and S1042 each carry the phosphoserine modification. One can recognise an SH3 domain in the interval 1055 to 1116 (LVPGKYTVLM…PASSLATLLG (62 aa)).

The protein belongs to the MCF2 family. Interacts with GTP-bound RAC1. Interacts with CDC42. Interacts with RHOA. Interacts with CCPG1, which results in specific inhibition of its exchange activity toward RHOA, but does not affect its activity on CDC42. Mainly phosphorylated on serine. In terms of tissue distribution, highest expression in the brain, where it is found in neurons and alpha-tanycytes (at protein level). Detected in brain, and at lower levels in the heart.

Its subcellular location is the cytoplasm. It localises to the cell membrane. Functionally, guanine nucleotide exchange factor that catalyzes guanine nucleotide exchange on RHOA and CDC42, and thereby contributes to the regulation of RHOA and CDC42 signaling pathways. Seems to lack activity with RAC1. Becomes activated and highly tumorigenic by truncation of the N-terminus. This Rattus norvegicus (Rat) protein is Guanine nucleotide exchange factor DBS (Mcf2l).